The sequence spans 734 residues: Photosystem I P700 chlorophyll a apoprotein A2 (734 aa).

8 consecutive transmembrane segments (helical) span residues 46–69 (IFAS…FHVA), 135–158 (LYTG…LHLQ), 175–199 (LNHH…HVAI), 273–291 (IAHH…GHMY), 330–353 (IHFQ…QHMY), 369–395 (AALY…IFFI), 417–439 (AIIS…LYVH), and 517–535 (FLVH…LILV). Cys559 and Cys568 together coordinate [4Fe-4S] cluster. A run of 2 helical transmembrane segments spans residues 575 to 596 (AFYL…YWHW) and 643 to 665 (LSVW…MFLI). Residues His654, Met662, and Tyr670 each contribute to the chlorophyll a site. Position 671 (Trp671) interacts with phylloquinone. Residues 707 to 727 (LVGLAHFSVGYIFTYAAFLIA) traverse the membrane as a helical segment.

This sequence belongs to the PsaA/PsaB family. The PsaA/B heterodimer binds the P700 chlorophyll special pair and subsequent electron acceptors. PSI consists of a core antenna complex that captures photons, and an electron transfer chain that converts photonic excitation into a charge separation. The eukaryotic PSI reaction center is composed of at least 11 subunits. Requires P700 is a chlorophyll a/chlorophyll a' dimer, A0 is one or more chlorophyll a, A1 is one or both phylloquinones and FX is a shared 4Fe-4S iron-sulfur center. as cofactor.

Its subcellular location is the plastid. It localises to the chloroplast thylakoid membrane. It catalyses the reaction reduced [plastocyanin] + hnu + oxidized [2Fe-2S]-[ferredoxin] = oxidized [plastocyanin] + reduced [2Fe-2S]-[ferredoxin]. Its function is as follows. PsaA and PsaB bind P700, the primary electron donor of photosystem I (PSI), as well as the electron acceptors A0, A1 and FX. PSI is a plastocyanin-ferredoxin oxidoreductase, converting photonic excitation into a charge separation, which transfers an electron from the donor P700 chlorophyll pair to the spectroscopically characterized acceptors A0, A1, FX, FA and FB in turn. Oxidized P700 is reduced on the lumenal side of the thylakoid membrane by plastocyanin. The polypeptide is Photosystem I P700 chlorophyll a apoprotein A2 (Pelargonium hortorum (Common geranium)).